Reading from the N-terminus, the 1111-residue chain is Cellulose synthase-like protein D4 (1111 aa).

Disordered stretches follow at residues 1–26 (MASTPPQTSKKVRNNSGSGQTVKFAR) and 175–202 (DYSSGALPLPAPGKDQRGNNNNMSMMKR). Residues 192 to 202 (GNNNNMSMMKR) are compositionally biased toward polar residues. The next 2 helical transmembrane spans lie at 266 to 286 (AIISPYRLLIVIRFVVLCFFL) and 297 to 317 (AIWLWLMSIICELWFGFSWIL). Residues D397 and D809 contribute to the active site. Helical transmembrane passes span 891 to 911 (LFLILYCFLPAFSLFSGQFIV), 914 to 934 (LSISFLVYLLMITICLIGLAV), 963 to 983 (LYAVVQGVLKVIAGIEISFTL), 1007 to 1027 (LMIPPIVIAMVNIIAIVVAFI), 1040 to 1060 (LIGGAFFSFWVLAHLYPFAKG), and 1070 to 1090 (TIVFVWAGLIAITISLLWTAI).

This sequence belongs to the glycosyltransferase 2 family. Plant cellulose synthase-like D subfamily.

It is found in the golgi apparatus membrane. Thought to be a Golgi-localized beta-glycan synthase that polymerize the backbones of noncellulosic polysaccharides (hemicelluloses) of plant cell wall. The sequence is that of Cellulose synthase-like protein D4 (CSLD4) from Arabidopsis thaliana (Mouse-ear cress).